A 139-amino-acid polypeptide reads, in one-letter code: AP-4 complex subunit sigma (139 aa).

This sequence belongs to the adaptor complexes small subunit family. In terms of assembly, may be part of the adaptor protein complex 4 (AP-4), a heterotetramer composed of two large adaptins (epsilon-type subunitand beta-type subunit), a medium adaptin (mu-type subunit) and a small adaptin (sigma-type).

Its subcellular location is the golgi apparatus. The protein localises to the trans-Golgi network membrane. Functionally, probable component of an adaptor protein complex. Adaptor protein complexes are vesicle coat components involved both in vesicle formation and cargo selection. They control the vesicular transport of proteins in different trafficking pathways. The protein is AP-4 complex subunit sigma of Dictyostelium discoideum (Social amoeba).